The sequence spans 115 residues: Large ribosomal subunit protein P2y (115 aa).

Positions 63 to 115 are disordered; it reads ASVPSGGGGGVAVASATSGGGGGGGASAAESKKEEKKEEKEESDDDMGFSLFE. The segment covering 92 to 102 has biased composition (basic and acidic residues); the sequence is ESKKEEKKEEK. Serine 105 carries the post-translational modification Phosphoserine.

It belongs to the eukaryotic ribosomal protein P1/P2 family. In terms of assembly, P1 and P2 exist as dimers at the large ribosomal subunit. Post-translationally, phosphorylated.

Plays an important role in the elongation step of protein synthesis. The protein is Large ribosomal subunit protein P2y (RPP2B) of Arabidopsis thaliana (Mouse-ear cress).